The following is a 500-amino-acid chain: Cytochrome P450 2D3 (500 aa).

C446 is a binding site for heme.

This sequence belongs to the cytochrome P450 family. Requires heme as cofactor.

The protein resides in the endoplasmic reticulum membrane. It is found in the microsome membrane. The catalysed reaction is an organic molecule + reduced [NADPH--hemoprotein reductase] + O2 = an alcohol + oxidized [NADPH--hemoprotein reductase] + H2O + H(+). Its function is as follows. Cytochromes P450 are a group of heme-thiolate monooxygenases. In liver microsomes, this enzyme is involved in an NADPH-dependent electron transport pathway. It oxidizes a variety of structurally unrelated compounds, including steroids, fatty acids, and xenobiotics. The protein is Cytochrome P450 2D3 (Cyp2d3) of Rattus norvegicus (Rat).